Reading from the N-terminus, the 783-residue chain is B-cell scaffold protein with ankyrin repeats (783 aa).

The segment at 1–154 is interaction with ITPR2; sequence MLPVASGTRG…GYISVIRQIL (154 aa). Positions 25 to 153 constitute a TIR domain; that stretch reads NAKDILLLYE…DGYISVIRQI (129 aa). Residues 199–326 enclose the DBB domain; it reads VLPGEIPCEK…EIPYYEFKHL (128 aa). 2 ANK repeats span residues 341–370 and 377–407; these read ELPT…ATRA and DGSD…NTGR. Disordered regions lie at residues 422-521, 538-586, 604-624, and 641-670; these read FSTY…AASQ, MERS…EDNE, SFII…PPKE, and RQSD…STRD. Over residues 444-479 the composition is skewed to basic and acidic residues; it reads RNTDRSEEPERSVEMKEEEAGAEARRSLSEGERESS. The segment covering 505–515 has biased composition (pro residues); it reads HCRPPLLPPRP. Residues 549 to 565 are compositionally biased toward basic and acidic residues; sequence ARPETREESSREEKKEE. The segment covering 566–586 has biased composition (acidic residues); the sequence is AQEEEEEEENPYAFAETEDNE. A compositionally biased stretch (pro residues) spans 610–620; that stretch reads PPAPTPRPTHI. Positions 641-660 are enriched in basic and acidic residues; the sequence is RQSDGDKFYSLPKKPDKTRM. Phosphotyrosine is present on tyrosine 649.

Interacts with LYN, ITPR1 and ITPR2. Post-translationally, phosphorylated on tyrosines upon BCR activation. Specifically expressed in spleen. Highly expressed in immature B-cells and recirculating B-cells, and at low levels in pro-B and pre-B cells.

In terms of biological role, involved in B-cell receptor (BCR)-induced Ca(2+) mobilization from intracellular stores. Promotes Lyn-mediated phosphorylation of IP3 receptors 1 and 2. The sequence is that of B-cell scaffold protein with ankyrin repeats (Bank1) from Mus musculus (Mouse).